The primary structure comprises 274 residues: Methionine-binding lipoprotein MetQ (274 aa).

A signal peptide spans 1-19 (MKKLFLGALLLVFAGVMAA). C20 is lipidated: N-palmitoyl cysteine. C20 carries the S-diacylglycerol cysteine lipid modification.

Belongs to the NlpA lipoprotein family. The complex is composed of two ATP-binding proteins (MetN), two transmembrane proteins (MetP) and a solute-binding protein (metQ).

It localises to the cell membrane. Its function is as follows. Part of the ABC transporter complex MetNPQ involved in methionine import. Binds the methionine and transfers it to the membrane-bound permease. It has also been shown to be involved in methionine sulfoxide transport. The polypeptide is Methionine-binding lipoprotein MetQ (metQ) (Bacillus subtilis (strain 168)).